A 262-amino-acid chain; its full sequence is Acyl-[acyl-carrier-protein]--UDP-N-acetylglucosamine O-acyltransferase (262 aa).

This sequence belongs to the transferase hexapeptide repeat family. LpxA subfamily. As to quaternary structure, homotrimer.

It localises to the cytoplasm. The enzyme catalyses a (3R)-hydroxyacyl-[ACP] + UDP-N-acetyl-alpha-D-glucosamine = a UDP-3-O-[(3R)-3-hydroxyacyl]-N-acetyl-alpha-D-glucosamine + holo-[ACP]. Its pathway is glycolipid biosynthesis; lipid IV(A) biosynthesis; lipid IV(A) from (3R)-3-hydroxytetradecanoyl-[acyl-carrier-protein] and UDP-N-acetyl-alpha-D-glucosamine: step 1/6. Involved in the biosynthesis of lipid A, a phosphorylated glycolipid that anchors the lipopolysaccharide to the outer membrane of the cell. The polypeptide is Acyl-[acyl-carrier-protein]--UDP-N-acetylglucosamine O-acyltransferase (Paraburkholderia phymatum (strain DSM 17167 / CIP 108236 / LMG 21445 / STM815) (Burkholderia phymatum)).